We begin with the raw amino-acid sequence, 515 residues long: Putative pumilio homolog 8, chloroplastic (515 aa).

The interval 1-33 (MMRGEFGEASSLSRSPSSPLQTEPHPQSPKFYR) is disordered. The transit peptide at 1–70 (MMRGEFGEAS…LSSYFSNGLC (70 aa)) directs the protein to the chloroplast. Residues 10 to 20 (SSLSRSPSSPL) show a composition bias toward low complexity. The PUM-HD domain maps to 174–515 (SGVGALFDHQ…RIFSRNLLKN (342 aa)). Pumilio repeat units follow at residues 198–233 (EFQGYVYFMAKDQHGCRFLQWIFEDGSALDALVIFS), 234–269 (EVIPHVVELMMDPFGNYLMQKLLDVCNEEQRTQIIL), 270–308 (MVTSEPGQLIRISLNAYGTRVVQRLVESIKTRKQISLVK), 310–345 (ALRPGFLNLIRDLNGNHVIQRCLQCLSTEDNEFIFE), 346–381 (DATKFCIDIATHRHGCCVLQKCIAYSSGLQREKLVT), 382–417 (EISRNSLFLAQDPYGNYAVQFVLELRDFSAIAAMLA), 418–456 (QLKGHYVELSMQKFSSHMVERCLTHCPESRPQIVRELIS), and 457–490 (VPHFDILIQDPYANFVIQAALAVTKGSLHATLVE).

It is found in the plastid. It localises to the chloroplast. The protein resides in the cytoplasm. Its function is as follows. Sequence-specific RNA-binding protein that regulates translation and mRNA stability by binding the 3'-UTR of target mRNAs. In Arabidopsis thaliana (Mouse-ear cress), this protein is Putative pumilio homolog 8, chloroplastic (APUM8).